The following is a 215-amino-acid chain: Leucyl/phenylalanyl-tRNA--protein transferase (215 aa).

The protein belongs to the L/F-transferase family.

It localises to the cytoplasm. It catalyses the reaction N-terminal L-lysyl-[protein] + L-leucyl-tRNA(Leu) = N-terminal L-leucyl-L-lysyl-[protein] + tRNA(Leu) + H(+). The enzyme catalyses N-terminal L-arginyl-[protein] + L-leucyl-tRNA(Leu) = N-terminal L-leucyl-L-arginyl-[protein] + tRNA(Leu) + H(+). It carries out the reaction L-phenylalanyl-tRNA(Phe) + an N-terminal L-alpha-aminoacyl-[protein] = an N-terminal L-phenylalanyl-L-alpha-aminoacyl-[protein] + tRNA(Phe). In terms of biological role, functions in the N-end rule pathway of protein degradation where it conjugates Leu, Phe and, less efficiently, Met from aminoacyl-tRNAs to the N-termini of proteins containing an N-terminal arginine or lysine. This Campylobacter jejuni subsp. jejuni serotype O:2 (strain ATCC 700819 / NCTC 11168) protein is Leucyl/phenylalanyl-tRNA--protein transferase.